The sequence spans 147 residues: Hemoglobin subunit gamma-1 (147 aa).

Glycine 2 bears the N-acetylglycine mark. One can recognise a Globin domain in the interval 3-147; the sequence is HFTEEDKATI…VASALSSRYH (145 aa). Threonine 13 is subject to Phosphothreonine. Serine 45, serine 51, and serine 53 each carry phosphoserine. Lysine 60 carries the post-translational modification N6-acetyllysine. Residue histidine 64 coordinates heme b. Lysine 83 carries the N6-acetyllysine modification. Histidine 93 contacts heme b. Cysteine 94 carries the post-translational modification S-nitrosocysteine. Serine 140 is subject to Phosphoserine.

It belongs to the globin family. Heterotetramer of two alpha chains and two gamma chains in fetal hemoglobin (Hb F). The ratio of gamma-G to gamma-A chains in is approximately 2:1 in infant chimpanzee, and 1:2 in the adult. Red blood cells.

Its function is as follows. Gamma chains make up the fetal hemoglobin F, in combination with alpha chains. The chain is Hemoglobin subunit gamma-1 (HBG1) from Pan troglodytes (Chimpanzee).